The primary structure comprises 106 residues: Nucleoid-associated protein BBta_7345 (106 aa).

The protein belongs to the YbaB/EbfC family. Homodimer.

It is found in the cytoplasm. It localises to the nucleoid. Functionally, binds to DNA and alters its conformation. May be involved in regulation of gene expression, nucleoid organization and DNA protection. The sequence is that of Nucleoid-associated protein BBta_7345 from Bradyrhizobium sp. (strain BTAi1 / ATCC BAA-1182).